The following is a 258-amino-acid chain: MLLIPISSSSSSSISPPPNSYPSNHHSLFFSNLTFPIQHGSRKLKTLRLRANFWESIRSGFVKNNNSTQLVEPPSIVNDEEEETEPLLPVEFTLVERNLEDGLVEEIIFSSGGEIDVYDLQGLCDKVGWPRRPLVKLAAALKNSYMVATLHSVMKSSSDSDSSEGGDGEKQQEKKLIGMARATSDHAFNATIWDVLVDPEYQGQGLGKALVEKLVRALLQRDIGNISLFADSQVVDFYQNLGFEADPEGIKGMFWYPK.

A chloroplast-targeting transit peptide spans 1-58 (MLLIPISSSSSSSISPPPNSYPSNHHSLFFSNLTFPIQHGSRKLKTLRLRANFWESIR). Positions 107–194 (IIFSSGGEID…DHAFNATIWD (88 aa)) are interaction with begomoviruses NSP protein. Residues 107 to 258 (IIFSSGGEID…GIKGMFWYPK (152 aa)) form the N-acetyltransferase domain. Residues 195–197 (VLV), 203–208 (GQGLGK), 231–233 (DSQ), and Y238 contribute to the acetyl-CoA site. Y238 functions as the Proton donor in the catalytic mechanism.

It belongs to the acetyltransferase family. GNAT subfamily. As to quaternary structure, oligomer. Interacts with begomoviruses NSP but not with CP. This interaction may allow NSP to recruit NSI monomers to acetylate viral genome-bound CP and thus regulate nuclear export of viral genome by NSP. Post-translationally, S-sulfhydrated and activated by hydrogen sulfide H(2)S to promote melatonin accumulation and subsequent melatonin-dependent stomotal closure to combat osmotic stress. Autoacetylated. In terms of tissue distribution, highly expressed in cauline leaves and seeds, at lower levels in stems, siliques, inflorescences and rosettes leaves and at very low levels in roots. Expressed in the xylem parenchyma and phloem of the leaves and root, and in guard cells of young leaves.

The protein resides in the plastid. Its subcellular location is the chloroplast. The enzyme catalyses 5-methoxytryptamine + acetyl-CoA = melatonin + CoA + H(+). It catalyses the reaction L-lysyl-[histone] + acetyl-CoA = N(6)-acetyl-L-lysyl-[histone] + CoA + H(+). It carries out the reaction L-lysyl-[protein] + acetyl-CoA = N(6)-acetyl-L-lysyl-[protein] + CoA + H(+). The catalysed reaction is serotonin + acetyl-CoA = N-acetylserotonin + CoA + H(+). The enzyme catalyses N-terminal L-alanyl-[protein] + acetyl-CoA = N-terminal N(alpha)-acetyl-L-alanyl-[protein] + CoA + H(+). It catalyses the reaction N-terminal L-seryl-[protein] + acetyl-CoA = N-terminal N(alpha)-acetyl-L-seryl-[protein] + CoA + H(+). It carries out the reaction N-terminal L-valyl-[protein] + acetyl-CoA = N-terminal N(alpha)-acetyl-L-valyl-[protein] + CoA + H(+). The catalysed reaction is N-terminal glycyl-[protein] + acetyl-CoA = N-terminal N(alpha)-acetylglycyl-[protein] + CoA + H(+). The enzyme catalyses an N-terminal L-alpha-aminoacyl-[protein] + acetyl-CoA = N-terminal N(alpha)-acetyl-L-alpha-aminoacyl-[protein] + CoA + H(+). It catalyses the reaction N-terminal L-threonyl-[protein] + acetyl-CoA = N-terminal N(alpha)-acetyl-L-threonyl-[protein] + CoA + H(+). It carries out the reaction N-terminal L-methionyl-[protein] + acetyl-CoA = N-terminal N(alpha)-acetyl-L-methionyl-[protein] + CoA + H(+). The catalysed reaction is N-terminal L-leucyl-[protein] + acetyl-CoA = N-terminal N(alpha)-acetyl-L-leucyl-[protein] + CoA + H(+). Inhibited by the viral nuclear shuttle protein (NSP) that binds to the region required for oligomerization. Functionally, protein acetyltransferase with dual specificity triggering both N-alpha-acetylation (NTA), with a preference for alanine, serine, threonine, methionine and to a lower extent valine as substrates (can also use glycine and leucine), and epsilon-lysine acetylation (KA) of several plastid proteins. Triggers lysine acetylation in KEA1 and KEA2. Acetylates in vitro histones H2A and H3. Does not act as a transcriptional activator but required for the dynamic reorganization of thylakoid protein complexes and grana during photosynthetic state transitions. Involved in melatonin biosynthesis by catalyzing the formation of N-acetylserotonin (NAS) from serotonin and of melatonin (N-acetyl-5-methoxytryptamine) from 5-methoxytryptamine (5-MT). By triggering melatonin biosynthesis, contributes to the chloroplast protein quality control (CPQC), which plays a pivotal role in starch synthesis, and confers melatonin-associated tolerance to high light (HL) stress. Prevents the accumulation of oil and anthocyanin content in mature seeds and avoids seed germination in a melatonin-dependent manner, but promotes mucilage production in the seed coat. Contributes to melatonin-mediated anthocyanin production in cold-exposed seedlings. Implicated in melatonin-monitored circadian dynamics of stomatal aperture to minimize night water loss and promote drought tolerance, partly by triggering hydrogen sulfide H(2)S-dependent stomotal closure in response to osmotic stress. (Microbial infection) Required for begomovirus infection and systemic spread. In case of begomoviruses infection, acetylates the capsid protein (CP), but not the nuclear shuttle protein (NSP). Stimulates melatonin-triggered defense responses to the necrotrophic Botrytis cinerea. This is GCN5-related N-acetyltransferase 2, chloroplastic from Arabidopsis thaliana (Mouse-ear cress).